The sequence spans 69 residues: Toxin Tma3 (69 aa).

Residues 2–66 form the LCN-type CS-alpha/beta domain; that stretch reads KDDYPVDTAK…SPTKKSGRCN (65 aa). Cystine bridges form between C14-C65, C18-C41, C27-C48, and C31-C50.

This sequence belongs to the long (4 C-C) scorpion toxin superfamily. Sodium channel inhibitor family. In terms of tissue distribution, expressed by the venom gland.

The protein localises to the secreted. Inhibits voltage-gated sodium channels (Nav). This toxin shows insect lethality against crickets. The polypeptide is Toxin Tma3 (Tityus macrochirus (Scorpion)).